The primary structure comprises 571 residues: Carboxylesterase 3B (571 aa).

The first 31 residues, 1-31 (MTNMRTMIPAGSSVLVWVTCLLLAFVTTVTG), serve as a signal peptide directing secretion. The cysteines at positions 100 and 127 are disulfide-linked. Serine 232 serves as the catalytic Acyl-ester intermediate. Cysteine 284 and cysteine 295 form a disulfide bridge. Asparagine 311 carries N-linked (GlcNAc...) asparagine glycosylation. Residues glutamate 347 and histidine 460 each act as charge relay system in the active site. The short motif at 568-571 (PEEL) is the Prevents secretion from ER element.

It belongs to the type-B carboxylesterase/lipase family.

It is found in the endoplasmic reticulum lumen. It catalyses the reaction a carboxylic ester + H2O = an alcohol + a carboxylate + H(+). Its function is as follows. Involved in the detoxification of xenobiotics and in the activation of ester and amide prodrugs. The protein is Carboxylesterase 3B (Ces3b) of Mus musculus (Mouse).